Consider the following 38-residue polypeptide: Photosystem II reaction center protein L (38 aa).

A helical transmembrane segment spans residues 17–37 (SLFWGLLLIFVLAVLFSNYFF).

This sequence belongs to the PsbL family. As to quaternary structure, PSII is composed of 1 copy each of membrane proteins PsbA, PsbB, PsbC, PsbD, PsbE, PsbF, PsbH, PsbI, PsbJ, PsbK, PsbL, PsbM, PsbT, PsbX, PsbY, PsbZ, Psb30/Ycf12, at least 3 peripheral proteins of the oxygen-evolving complex and a large number of cofactors. It forms dimeric complexes.

The protein localises to the plastid. The protein resides in the chloroplast thylakoid membrane. In terms of biological role, one of the components of the core complex of photosystem II (PSII). PSII is a light-driven water:plastoquinone oxidoreductase that uses light energy to abstract electrons from H(2)O, generating O(2) and a proton gradient subsequently used for ATP formation. It consists of a core antenna complex that captures photons, and an electron transfer chain that converts photonic excitation into a charge separation. This subunit is found at the monomer-monomer interface and is required for correct PSII assembly and/or dimerization. This Chaetosphaeridium globosum (Charophycean green alga) protein is Photosystem II reaction center protein L.